The following is a 353-amino-acid chain: Quinolinate synthase (353 aa).

Iminosuccinate contacts are provided by histidine 47 and serine 68. A [4Fe-4S] cluster-binding site is contributed by cysteine 113. Residues 139–141 (YAN) and serine 156 each bind iminosuccinate. Position 200 (cysteine 200) interacts with [4Fe-4S] cluster. Residues 226–228 (HPE) and threonine 243 each bind iminosuccinate. Residue cysteine 297 coordinates [4Fe-4S] cluster.

The protein belongs to the quinolinate synthase family. Type 1 subfamily. It depends on [4Fe-4S] cluster as a cofactor.

The protein resides in the cytoplasm. The enzyme catalyses iminosuccinate + dihydroxyacetone phosphate = quinolinate + phosphate + 2 H2O + H(+). The protein operates within cofactor biosynthesis; NAD(+) biosynthesis; quinolinate from iminoaspartate: step 1/1. In terms of biological role, catalyzes the condensation of iminoaspartate with dihydroxyacetone phosphate to form quinolinate. The polypeptide is Quinolinate synthase (Pectobacterium carotovorum subsp. carotovorum (strain PC1)).